The primary structure comprises 358 residues: MTALAELTADLLAAVEAAPDLPALEEARVAALGKKGRITAMMGDMRSLTPEERKERGQQLNALKDRVAEAIEARRTVLKKEALAQRLEAERIDVTLPVRPEAEGRIHPISQTIDEIIAIFASMGFTVAEGPDIESDFHNFTALNIPPEHPARQMHDTFYLPPAGDGAARVLRTHTSPVQIRTMLQEKPPIRIIAPGRTYRSDYDQTHTPMFHQVEALVIGEDINMGHLKGCILEFARAFFQVDDLPVRFRPSFFPFTEPSAEVDIGCSRKGGELKIGNHGDWLEIMGSGMVHPKVLENCGLDPARWQGFAFGMGIERIAMLKYGIPDLRTFFEADLRWLKHYGFVPLDMPNLAQGLTR.

E258 is a binding site for Mg(2+).

It belongs to the class-II aminoacyl-tRNA synthetase family. Phe-tRNA synthetase alpha subunit type 1 subfamily. As to quaternary structure, tetramer of two alpha and two beta subunits. Requires Mg(2+) as cofactor.

It is found in the cytoplasm. It catalyses the reaction tRNA(Phe) + L-phenylalanine + ATP = L-phenylalanyl-tRNA(Phe) + AMP + diphosphate + H(+). In Rhodospirillum centenum (strain ATCC 51521 / SW), this protein is Phenylalanine--tRNA ligase alpha subunit.